The sequence spans 58 residues: Large ribosomal subunit protein bL32 (58 aa).

It belongs to the bacterial ribosomal protein bL32 family.

This is Large ribosomal subunit protein bL32 from Caldicellulosiruptor saccharolyticus (strain ATCC 43494 / DSM 8903 / Tp8T 6331).